We begin with the raw amino-acid sequence, 341 residues long: Ribosomal RNA small subunit methyltransferase H (341 aa).

Residues 47-49, aspartate 64, phenylalanine 91, aspartate 109, and glutamine 116 each bind S-adenosyl-L-methionine; that span reads GGY.

Belongs to the methyltransferase superfamily. RsmH family.

Its subcellular location is the cytoplasm. The catalysed reaction is cytidine(1402) in 16S rRNA + S-adenosyl-L-methionine = N(4)-methylcytidine(1402) in 16S rRNA + S-adenosyl-L-homocysteine + H(+). Functionally, specifically methylates the N4 position of cytidine in position 1402 (C1402) of 16S rRNA. This Rhizobium leguminosarum bv. trifolii (strain WSM2304) protein is Ribosomal RNA small subunit methyltransferase H.